The sequence spans 136 residues: Holo-[acyl-carrier-protein] synthase (136 aa).

2 residues coordinate Mg(2+): D8 and E57.

Belongs to the P-Pant transferase superfamily. AcpS family. Mg(2+) serves as cofactor.

The protein resides in the cytoplasm. It catalyses the reaction apo-[ACP] + CoA = holo-[ACP] + adenosine 3',5'-bisphosphate + H(+). Its function is as follows. Transfers the 4'-phosphopantetheine moiety from coenzyme A to a Ser of acyl-carrier-protein. This Methylorubrum extorquens (strain CM4 / NCIMB 13688) (Methylobacterium extorquens) protein is Holo-[acyl-carrier-protein] synthase.